An 856-amino-acid chain; its full sequence is Envelope glycoprotein gp160 (856 aa).

Residues 1–31 (MRVKGIRRNCQHLWIWGTMLFGMWMICSAVE) form the signal peptide. Over 32–684 (QLWVTVYYGV…ITNWLWYIKI (653 aa)) the chain is Extracellular. Residues Cys53 and Cys73 are joined by a disulfide bond. N-linked (GlcNAc...) asparagine; by host glycosylation is found at Asn87, Asn134, Asn140, Asn151, Asn155, Asn183, Asn197, Asn234, Asn241, Asn262, Asn276, Asn289, and Asn295. Intrachain disulfides connect Cys118–Cys205, Cys125–Cys196, Cys130–Cys152, Cys218–Cys247, and Cys228–Cys239. The tract at residues 130-151 (CIDKNITDWENKTIIGGGEVKN) is V1. Positions 152-196 (CSFNITTSIRDKVHKEYALFYKLDVVPIKSNNDSSTYTRYRLIHC) are V2. Positions 296 to 329 (CTRPNNNVRRRHIHIGPGRAFYTGEIRGNIRQAH) are V3. Cys296 and Cys330 are oxidised to a cystine. N-linked (GlcNAc...) asparagine; by host glycans are attached at residues Asn331, Asn338, Asn354, and Asn360. Residues 362 to 372 (SSGGDPEIVTH) are CD4-binding loop. Intrachain disulfides connect Cys376–Cys444 and Cys383–Cys417. Residues 383–417 (CDSTQLFNSTWNVTGISTEGNNNTEENGDTITLPC) are V4. Residues Asn390, Asn394, Asn404, Asn447, and Asn459 are each glycosylated (N-linked (GlcNAc...) asparagine; by host). V5 stretches follow at residues 460–470 (SSSREEIFRPG) and 462–470 (SREEIFRPG). The fusion peptide stretch occupies residues 511–532 (AVGAIGAMFLGFLGAAGSTMGA). The immunosuppression stretch occupies residues 574 to 592 (KQLQARVLAVERYLRDQQL). Cysteines 598 and 604 form a disulfide. Asn611, Asn616, Asn625, and Asn637 each carry an N-linked (GlcNAc...) asparagine; by host glycan. A coiled-coil region spans residues 633–667 (REIDNYTSLIYNLIEESQNQQEKNEQELLELDKWA). The interval 662-683 (ELDKWASLWNWFSITNWLWYIK) is MPER; binding to GalCer. A helical membrane pass occupies residues 685 to 705 (FIMIVGGLVGLRIVFSVLSIV). At 706–856 (NRVRQGYSPL…IRQGLERALL (151 aa)) the chain is on the cytoplasmic side. A YXXL motif; contains endocytosis signal motif is present at residues 712-715 (YSPL). The segment at 716-742 (SFQTHLPTPRGPDRPEGTEEEGGERDR) is disordered. S-palmitoyl cysteine; by host attachment occurs at residues Cys764 and Cys837. A Di-leucine internalization motif motif is present at residues 855 to 856 (LL).

The protein belongs to the HIV-1 env protein family. The mature envelope protein (Env) consists of a homotrimer of non-covalently associated gp120-gp41 heterodimers. The resulting complex protrudes from the virus surface as a spike. There seems to be as few as 10 spikes on the average virion. Interacts with host CD4, CCR5 and CXCR4. Gp120 also interacts with the C-type lectins CD209/DC-SIGN and CLEC4M/DC-SIGNR (collectively referred to as DC-SIGN(R)). Gp120 and gp41 interact with GalCer. Gp120 interacts with host ITGA4/ITGB7 complex; on CD4+ T-cells, this interaction results in rapid activation of integrin ITGAL/LFA-1, which facilitates efficient cell-to-cell spreading of HIV-1. Gp120 interacts with cell-associated heparan sulfate; this interaction increases virus infectivity on permissive cells and may be involved in infection of CD4- cells. As to quaternary structure, the mature envelope protein (Env) consists of a homotrimer of non-covalently associated gp120-gp41 heterodimers. The resulting complex protrudes from the virus surface as a spike. There seems to be as few as 10 spikes on the average virion. Post-translationally, highly glycosylated by host. The high number of glycan on the protein is reffered to as 'glycan shield' because it contributes to hide protein sequence from adaptive immune system. In terms of processing, palmitoylation of the transmembrane protein and of Env polyprotein (prior to its proteolytic cleavage) is essential for their association with host cell membrane lipid rafts. Palmitoylation is therefore required for envelope trafficking to classical lipid rafts, but not for viral replication. Specific enzymatic cleavages in vivo yield mature proteins. Envelope glycoproteins are synthesized as an inactive precursor that is heavily N-glycosylated and processed likely by host cell furin in the Golgi to yield the mature SU and TM proteins. The cleavage site between SU and TM requires the minimal sequence [KR]-X-[KR]-R. About 2 of the 9 disulfide bonds of gp41 are reduced by P4HB/PDI, following binding to CD4 receptor.

It localises to the virion membrane. Its subcellular location is the host cell membrane. The protein localises to the host endosome membrane. Its function is as follows. Oligomerizes in the host endoplasmic reticulum into predominantly trimers. In a second time, gp160 transits in the host Golgi, where glycosylation is completed. The precursor is then proteolytically cleaved in the trans-Golgi and thereby activated by cellular furin or furin-like proteases to produce gp120 and gp41. Functionally, attaches the virus to the host lymphoid cell by binding to the primary receptor CD4. This interaction induces a structural rearrangement creating a high affinity binding site for a chemokine coreceptor like CXCR4 and/or CCR5. Acts as a ligand for CD209/DC-SIGN and CLEC4M/DC-SIGNR, which are respectively found on dendritic cells (DCs), and on endothelial cells of liver sinusoids and lymph node sinuses. These interactions allow capture of viral particles at mucosal surfaces by these cells and subsequent transmission to permissive cells. HIV subverts the migration properties of dendritic cells to gain access to CD4+ T-cells in lymph nodes. Virus transmission to permissive T-cells occurs either in trans (without DCs infection, through viral capture and transmission), or in cis (following DCs productive infection, through the usual CD4-gp120 interaction), thereby inducing a robust infection. In trans infection, bound virions remain infectious over days and it is proposed that they are not degraded, but protected in non-lysosomal acidic organelles within the DCs close to the cell membrane thus contributing to the viral infectious potential during DCs' migration from the periphery to the lymphoid tissues. On arrival at lymphoid tissues, intact virions recycle back to DCs' cell surface allowing virus transmission to CD4+ T-cells. Acts as a class I viral fusion protein. Under the current model, the protein has at least 3 conformational states: pre-fusion native state, pre-hairpin intermediate state, and post-fusion hairpin state. During fusion of viral and target intracellular membranes, the coiled coil regions (heptad repeats) assume a trimer-of-hairpins structure, positioning the fusion peptide in close proximity to the C-terminal region of the ectodomain. The formation of this structure appears to drive apposition and subsequent fusion of viral and target cell membranes. Complete fusion occurs in host cell endosomes and is dynamin-dependent, however some lipid transfer might occur at the plasma membrane. The virus undergoes clathrin-dependent internalization long before endosomal fusion, thus minimizing the surface exposure of conserved viral epitopes during fusion and reducing the efficacy of inhibitors targeting these epitopes. Membranes fusion leads to delivery of the nucleocapsid into the cytoplasm. The chain is Envelope glycoprotein gp160 from Homo sapiens (Human).